The following is a 389-amino-acid chain: Metal tolerance protein 2 (389 aa).

The Cytoplasmic portion of the chain corresponds to 1–81 (MGFRLAHLAA…GGEASERIFR (81 aa)). Residues 82–102 (LGLAADVVLTVGKAVTGYLSG) traverse the membrane as a helical segment. Topologically, residues 103–104 (ST) are vacuolar. A helical membrane pass occupies residues 105-125 (AIAADAAHSLSDIVLSGVALL). Residues 126 to 148 (SYKAAKAPRDKEHPYGHGKFESL) are Cytoplasmic-facing. A helical membrane pass occupies residues 149–169 (GALGISSMLLVTAGGIAWHAF). Over 170–206 (DVLQGVMSSAPDIIGNVSHAHHSHGSSGHHHGIDLEH) the chain is Vacuolar. A helical transmembrane segment spans residues 207–227 (PILALSVTAFAISVKEGLYWI). The Cytoplasmic portion of the chain corresponds to 228-250 (TKRAGEKEGSGLMKANAWHHRSD). A helical membrane pass occupies residues 251–271 (AISSVVALLGVGGSILGVPYL). Topologically, residues 272–275 (DPLA) are vacuolar. The chain crosses the membrane as a helical span at residues 276-296 (GLVVSGMILKAGVHTGYESVL). Over 297 to 389 (ELVDAAVDPS…SLQPLNQNAL (93 aa)) the chain is Cytoplasmic.

The protein belongs to the cation diffusion facilitator (CDF) transporter (TC 2.A.4) family. SLC30A subfamily.

The protein resides in the vacuole membrane. Its function is as follows. Involved in sequestration of excess metal in the cytoplasm into vacuoles to maintain metal homeostasis. The polypeptide is Metal tolerance protein 2 (MTP2) (Oryza sativa subsp. japonica (Rice)).